Here is a 206-residue protein sequence, read N- to C-terminus: Protein GET1 (206 aa).

Topologically, residues 1–4 (MPSL) are lumenal. The helical transmembrane segment at 5–24 (LITALFLNVIIYVINTVGAA) threads the bilayer. The Cytoplasmic segment spans residues 25-110 (TVDGLLWLLY…TFDITIKIAR (86 aa)). The stretch at 75-100 (AKLRRRHDKALEAYEAKNNELTQSKS) forms a coiled coil. The helical transmembrane segment at 111-131 (WAATSGLMLFLQFWYSKTPIF) threads the bilayer. At 132-155 (TLPPGWIPWQVQWVLSFPRAPMGT) the chain is on the lumenal side. The helical transmembrane segment at 156-172 (VSIQIWSGACATVVALV) threads the bilayer. The Cytoplasmic portion of the chain corresponds to 173–206 (GDAMKASLAYVSKPKIDRIKLGATMEGKEGKKRQ).

It belongs to the WRB/GET1 family. Interacts with GET3.

It localises to the endoplasmic reticulum membrane. Required for the post-translational delivery of tail-anchored (TA) proteins to the endoplasmic reticulum. Acts as a membrane receptor for soluble GET3, which recognizes and selectively binds the transmembrane domain of TA proteins in the cytosol. In Ajellomyces capsulatus (strain H143) (Darling's disease fungus), this protein is Protein GET1.